The chain runs to 922 residues: Phosphoenolpyruvate carboxylase (922 aa).

Residues 1–20 are disordered; the sequence is MTKTLHARPSAATDTTFAPP. Active-site residues include His-142 and Lys-581.

It belongs to the PEPCase type 1 family. Requires Mg(2+) as cofactor.

It carries out the reaction oxaloacetate + phosphate = phosphoenolpyruvate + hydrogencarbonate. Its function is as follows. Forms oxaloacetate, a four-carbon dicarboxylic acid source for the tricarboxylic acid cycle. This is Phosphoenolpyruvate carboxylase (ppc) from Methylorubrum extorquens (strain ATCC 14718 / DSM 1338 / JCM 2805 / NCIMB 9133 / AM1) (Methylobacterium extorquens).